The chain runs to 560 residues: Leiomodin-3 (560 aa).

The interaction with tropomyosin alpha stretch occupies residues 1-49; sequence MSEHSRNSDQEELLDEEINEDEILANLSAEELKELQSEMEVMAPDPSLP. Positions 16-42 form a coiled coil; the sequence is EEINEDEILANLSAEELKELQSEMEVM. Disordered regions lie at residues 45 to 68 and 127 to 217; these read DPSL…NFNH and IVAN…SKLD. Residues 142–167 show a composition bias toward acidic residues; the sequence is ETDEEDEEEEDDDDDDEGEDDGEESE. A compositionally biased stretch (basic and acidic residues) spans 168–182; that stretch reads ETNREEEGKAKEQIR. Polar residues predominate over residues 183 to 192; sequence NCENNCQQVT. Positions 194–217 are enriched in basic and acidic residues; that stretch reads KAFKEQRDRPEAQEQSEKKISKLD. Residues 386–425 adopt a coiled-coil conformation; it reads VTNLLTRNQDKQRQKRQEEQKQQQLKEQKKLIAMLENGLG. Disordered regions lie at residues 437-480 and 494-530; these read PKPD…KYRT and QRKS…PPLV. The segment covering 448–458 has biased composition (pro residues); it reads QPPPPRPPNPQ. Over residues 498-516 the composition is skewed to basic and acidic residues; the sequence is RMPEAREPPEKTNLKDVIK. The 20-residue stretch at 534 to 553 folds into the WH2 domain; sequence PRDQLLNDIRHSSVAYLKPV.

Belongs to the tropomodulin family. May interact with tropomyosin alpha (TPM1/2) N-terminus. Interacts with KLHL40; leading to stabilization. In terms of processing, ubiquitinated, leading to its degradation. Interaction with KLHL40 negatively regulates ubiquitination and degradation. In terms of tissue distribution, expressed in cardiac and at higher levels in skeletal muscles (at protein level).

Its subcellular location is the cytoplasm. It is found in the myofibril. The protein resides in the sarcomere. It localises to the m line. The protein localises to the a band. Its subcellular location is the cytoskeleton. In terms of biological role, essential for the organization of sarcomeric actin thin filaments in skeletal muscle. Increases the rate of actin polymerization. This Homo sapiens (Human) protein is Leiomodin-3 (LMOD3).